The following is a 1188-amino-acid chain: uncharacterized protein (1188 aa).

Disordered stretches follow at residues 126–468 (GDLR…SQME), 484–771 (EDRF…LYKP), 790–823 (ARGG…TDEL), and 847–1039 (QRAQ…FSRF). Composition is skewed to pro residues over residues 139–151 (IPPP…PGPP), 159–193 (GGSP…PPPV), and 208–240 (IPTP…PAPA). Phosphoserine is present on Ser-260. Residues 322-331 (EAPRKEEGAT) show a composition bias toward basic and acidic residues. Pro residues predominate over residues 389–418 (TPPPAPPLPPPAPPLPPPAPPLPPAAPPLP). Residues 432–441 (KTPKSSSPAL) show a composition bias toward low complexity. Composition is skewed to basic and acidic residues over residues 501 to 514 (KEGK…EKET) and 566 to 583 (IRNE…KEAK). Over residues 618-633 (LPPQSTTLLPTTSLQP) the composition is skewed to low complexity. Over residues 640 to 652 (AIPPKATPEPAIP) the composition is skewed to pro residues. At Thr-666 the chain carries Phosphothreonine. The span at 689–703 (PAIASTATTLPTTTS) shows a compositional bias: low complexity. Positions 875–893 (AEASSDSIFHSQGTPNSFT) are enriched in polar residues. Basic and acidic residues predominate over residues 920 to 931 (LGRDAEGTELSR). The segment covering 986 to 1001 (IPPPPEFSNDPEPPAP) has biased composition (pro residues). Polar residues predominate over residues 1007 to 1019 (GRQSSPPRNNYSD). Residues 1026-1035 (AGPGAPPALG) are compositionally biased toward low complexity. Asymmetric dimethylarginine is present on Arg-1044. Positions 1069–1160 (GEPHRGPGLP…SPYTTTRYGS (92 aa)) are disordered. An omega-N-methylarginine mark is found at Arg-1073 and Arg-1084. An Asymmetric dimethylarginine modification is found at Arg-1157.

This is an uncharacterized protein from Homo sapiens (Human).